The following is a 337-amino-acid chain: Phosphoribosylformylglycinamidine cyclo-ligase (337 aa).

The protein belongs to the AIR synthase family.

The protein resides in the cytoplasm. The catalysed reaction is 2-formamido-N(1)-(5-O-phospho-beta-D-ribosyl)acetamidine + ATP = 5-amino-1-(5-phospho-beta-D-ribosyl)imidazole + ADP + phosphate + H(+). The protein operates within purine metabolism; IMP biosynthesis via de novo pathway; 5-amino-1-(5-phospho-D-ribosyl)imidazole from N(2)-formyl-N(1)-(5-phospho-D-ribosyl)glycinamide: step 2/2. The protein is Phosphoribosylformylglycinamidine cyclo-ligase of Pseudothermotoga lettingae (strain ATCC BAA-301 / DSM 14385 / NBRC 107922 / TMO) (Thermotoga lettingae).